Consider the following 477-residue polypeptide: Ribulose bisphosphate carboxylase large chain (477 aa).

A propeptide spanning residues 1–2 (MS) is cleaved from the precursor. An N-acetylproline modification is found at Pro-3. Lys-14 carries the post-translational modification N6,N6,N6-trimethyllysine. Residues Asn-123 and Thr-173 each contribute to the substrate site. Lys-175 serves as the catalytic Proton acceptor. Lys-177 contributes to the substrate binding site. Mg(2+) contacts are provided by Lys-201, Asp-203, and Glu-204. Residue Lys-201 is modified to N6-carboxylysine. The active-site Proton acceptor is His-294. Arg-295, His-327, and Ser-379 together coordinate substrate.

It belongs to the RuBisCO large chain family. Type I subfamily. In terms of assembly, heterohexadecamer of 8 large chains and 8 small chains; disulfide-linked. The disulfide link is formed within the large subunit homodimers. The cofactor is Mg(2+). In terms of processing, the disulfide bond which can form in the large chain dimeric partners within the hexadecamer appears to be associated with oxidative stress and protein turnover.

The protein resides in the plastid. The protein localises to the chloroplast. The catalysed reaction is 2 (2R)-3-phosphoglycerate + 2 H(+) = D-ribulose 1,5-bisphosphate + CO2 + H2O. The enzyme catalyses D-ribulose 1,5-bisphosphate + O2 = 2-phosphoglycolate + (2R)-3-phosphoglycerate + 2 H(+). Its function is as follows. RuBisCO catalyzes two reactions: the carboxylation of D-ribulose 1,5-bisphosphate, the primary event in carbon dioxide fixation, as well as the oxidative fragmentation of the pentose substrate in the photorespiration process. Both reactions occur simultaneously and in competition at the same active site. The chain is Ribulose bisphosphate carboxylase large chain from Carthamus tinctorius (Safflower).